Here is a 195-residue protein sequence, read N- to C-terminus: Inner membrane-spanning protein YciB (195 aa).

5 helical membrane passes run 34 to 54 (IYGA…ALWL), 65 to 85 (FTLG…EDTF), 88 to 108 (WKAP…HFIG), 131 to 151 (LNIA…YVVF), and 160 to 180 (FKVF…GIFL).

It belongs to the YciB family.

It is found in the cell inner membrane. Its function is as follows. Plays a role in cell envelope biogenesis, maintenance of cell envelope integrity and membrane homeostasis. The sequence is that of Inner membrane-spanning protein YciB from Pseudomonas paraeruginosa (strain DSM 24068 / PA7) (Pseudomonas aeruginosa (strain PA7)).